We begin with the raw amino-acid sequence, 346 residues long: MLVLGIESSCDETGLALYDTERGLLAHALHSQIAMHREYGGVVPELASRDHIRRALPLLEEVLAASGARRDDIDAIAFTQGPGLAGALLVGASIANALAFAWDKPTIGIHHLEGHLLSPLLVAEPPPFPFVALLVSGGHTQLMRVSDVGVYETLGETLDDAAGEAFDKTAKLLGLGYPGGPEVSRLAEAGTPGAVVLPRPMLHSGDLDFSFSGLKTAVLTQMKKLEAAHAGGAVLERAKADLARGFVDAAVDVLVAKSLAALKATRLKRLVVAGGVGANRQLRAALSAAAQKRGFDVHYPDLALCTDNGAMIALAGALRLARWPSQASRDYAFTVKPRWDLASLAR.

Fe cation contacts are provided by histidine 111 and histidine 115. Residues 134–138 (LVSGG), aspartate 167, glycine 180, and asparagine 279 each bind substrate. A Fe cation-binding site is contributed by aspartate 307.

It belongs to the KAE1 / TsaD family. Fe(2+) is required as a cofactor.

The protein localises to the cytoplasm. The catalysed reaction is L-threonylcarbamoyladenylate + adenosine(37) in tRNA = N(6)-L-threonylcarbamoyladenosine(37) in tRNA + AMP + H(+). Its function is as follows. Required for the formation of a threonylcarbamoyl group on adenosine at position 37 (t(6)A37) in tRNAs that read codons beginning with adenine. Is involved in the transfer of the threonylcarbamoyl moiety of threonylcarbamoyl-AMP (TC-AMP) to the N6 group of A37, together with TsaE and TsaB. TsaD likely plays a direct catalytic role in this reaction. The sequence is that of tRNA N6-adenosine threonylcarbamoyltransferase from Burkholderia mallei (strain ATCC 23344).